The chain runs to 175 residues: NADH-quinone oxidoreductase subunit I (175 aa).

4Fe-4S ferredoxin-type domains lie at 69 to 98 (KRDEQGRERCTACFCCMWICPANAIHIEAA) and 115 to 144 (KKFEINLLRCIFCGLCEEACPKGAIYLDGT). [4Fe-4S] cluster contacts are provided by Cys-78, Cys-81, Cys-84, Cys-88, Cys-124, Cys-127, Cys-130, and Cys-134.

Belongs to the complex I 23 kDa subunit family. NDH-1 is composed of 14 different subunits. Subunits NuoA, H, J, K, L, M, N constitute the membrane sector of the complex. Requires [4Fe-4S] cluster as cofactor.

The protein localises to the cell inner membrane. It catalyses the reaction a quinone + NADH + 5 H(+)(in) = a quinol + NAD(+) + 4 H(+)(out). NDH-1 shuttles electrons from NADH, via FMN and iron-sulfur (Fe-S) centers, to quinones in the respiratory chain. The immediate electron acceptor for the enzyme in this species is believed to be ubiquinone. Couples the redox reaction to proton translocation (for every two electrons transferred, four hydrogen ions are translocated across the cytoplasmic membrane), and thus conserves the redox energy in a proton gradient. This Leptospira biflexa serovar Patoc (strain Patoc 1 / Ames) protein is NADH-quinone oxidoreductase subunit I.